A 185-amino-acid chain; its full sequence is Orotate phosphoribosyltransferase (185 aa).

Residues R94, K95, K98, H100, and 120 to 128 (EDVTTTGGS) each bind 5-phospho-alpha-D-ribose 1-diphosphate. Residues T124 and R152 each contribute to the orotate site.

It belongs to the purine/pyrimidine phosphoribosyltransferase family. PyrE subfamily. Homodimer. Requires Mg(2+) as cofactor.

It catalyses the reaction orotidine 5'-phosphate + diphosphate = orotate + 5-phospho-alpha-D-ribose 1-diphosphate. Its pathway is pyrimidine metabolism; UMP biosynthesis via de novo pathway; UMP from orotate: step 1/2. Catalyzes the transfer of a ribosyl phosphate group from 5-phosphoribose 1-diphosphate to orotate, leading to the formation of orotidine monophosphate (OMP). This is Orotate phosphoribosyltransferase from Thermococcus kodakarensis (strain ATCC BAA-918 / JCM 12380 / KOD1) (Pyrococcus kodakaraensis (strain KOD1)).